The sequence spans 516 residues: uncharacterized protein (516 aa).

The residue at position 21 (Ser-21) is a Phosphoserine. Residues 46–74 (DLQSSMEDSNKANGNGEETTDGAEGVLQT) are disordered. A compositionally biased stretch (polar residues) spans 47 to 62 (LQSSMEDSNKANGNGE). 6 WD repeats span residues 182–227 (TFPL…AVYP), 252–292 (YHTD…CVKS), 295–335 (YHSD…APSS), 337–377 (QVTS…KSVW), 381–421 (AHDG…PKMV), and 426–468 (LDVG…GVRK). A compositionally biased stretch (basic and acidic residues) spans 482-493 (ERIVQLEDRGAG). The interval 482–516 (ERIVQLEDRGAGEDSSDDDDYEDIEDDDDQDAEMS) is disordered. Acidic residues predominate over residues 495–516 (DSSDDDDYEDIEDDDDQDAEMS). 2 positions are modified to phosphoserine: Ser-496 and Ser-497.

It localises to the cytoplasm. The protein resides in the nucleus. The protein localises to the nucleolus. This is an uncharacterized protein from Schizosaccharomyces pombe (strain 972 / ATCC 24843) (Fission yeast).